The primary structure comprises 383 residues: Succinyl-diaminopimelate desuccinylase (383 aa).

H74 lines the Zn(2+) pocket. D76 is a catalytic residue. D107 contributes to the Zn(2+) binding site. E141 (proton acceptor) is an active-site residue. Residues E142, E170, and H356 each coordinate Zn(2+).

It belongs to the peptidase M20A family. DapE subfamily. As to quaternary structure, homodimer. Zn(2+) serves as cofactor. Requires Co(2+) as cofactor.

It carries out the reaction N-succinyl-(2S,6S)-2,6-diaminopimelate + H2O = (2S,6S)-2,6-diaminopimelate + succinate. It participates in amino-acid biosynthesis; L-lysine biosynthesis via DAP pathway; LL-2,6-diaminopimelate from (S)-tetrahydrodipicolinate (succinylase route): step 3/3. Functionally, catalyzes the hydrolysis of N-succinyl-L,L-diaminopimelic acid (SDAP), forming succinate and LL-2,6-diaminopimelate (DAP), an intermediate involved in the bacterial biosynthesis of lysine and meso-diaminopimelic acid, an essential component of bacterial cell walls. This Cupriavidus necator (strain ATCC 17699 / DSM 428 / KCTC 22496 / NCIMB 10442 / H16 / Stanier 337) (Ralstonia eutropha) protein is Succinyl-diaminopimelate desuccinylase.